The chain runs to 201 residues: Molybdenum cofactor guanylyltransferase (201 aa).

GTP contacts are provided by residues 14 to 16 (LAG), Lys-31, and Asp-104. Residue Asp-104 coordinates Mg(2+).

The protein belongs to the MobA family. As to quaternary structure, monomer. The cofactor is Mg(2+).

It localises to the cytoplasm. The catalysed reaction is Mo-molybdopterin + GTP + H(+) = Mo-molybdopterin guanine dinucleotide + diphosphate. In terms of biological role, transfers a GMP moiety from GTP to Mo-molybdopterin (Mo-MPT) cofactor (Moco or molybdenum cofactor) to form Mo-molybdopterin guanine dinucleotide (Mo-MGD) cofactor. In Helicobacter pylori (strain G27), this protein is Molybdenum cofactor guanylyltransferase.